A 282-amino-acid polypeptide reads, in one-letter code: Cell cycle checkpoint protein RAD1 (282 aa).

The protein belongs to the rad1 family. As to quaternary structure, component of the toroidal 9-1-1 (RAD9-RAD1-HUS1) complex, composed of RAD9A, RAD1 and HUS1. The 9-1-1 complex associates with LIG1, POLB, FEN1, RAD17, HDAC1, RPA1 and RPA2. The 9-1-1 complex associates with the RAD17-RFC complex. RAD1 interacts with POLB, FEN1, HUS1, HUS1B, RAD9A and RAD9B. Interacts with DNAJC7. Interacts with RHNO1; interaction is direct. Expressed in testis, uterus, bladder, spleen, ovaries, lung, brain and muscle (at protein level).

The protein localises to the nucleus. Functionally, component of the 9-1-1 cell-cycle checkpoint response complex that plays a major role in DNA repair. The 9-1-1 complex is recruited to DNA lesion upon damage by the RAD17-replication factor C (RFC) clamp loader complex. Acts then as a sliding clamp platform on DNA for several proteins involved in long-patch base excision repair (LP-BER). The 9-1-1 complex stimulates DNA polymerase beta (POLB) activity by increasing its affinity for the 3'-OH end of the primer-template and stabilizes POLB to those sites where LP-BER proceeds; endonuclease FEN1 cleavage activity on substrates with double, nick, or gap flaps of distinct sequences and lengths; and DNA ligase I (LIG1) on long-patch base excision repair substrates. The 9-1-1 complex is necessary for the recruitment of RHNO1 to sites of double-stranded breaks (DSB) occurring during the S phase. This is Cell cycle checkpoint protein RAD1 (RAD1) from Homo sapiens (Human).